Here is a 449-residue protein sequence, read N- to C-terminus: UDP-N-acetylmuramate--L-alanine ligase (449 aa).

121–127 (GAHGKSS) serves as a coordination point for ATP.

Belongs to the MurCDEF family.

It is found in the cytoplasm. It catalyses the reaction UDP-N-acetyl-alpha-D-muramate + L-alanine + ATP = UDP-N-acetyl-alpha-D-muramoyl-L-alanine + ADP + phosphate + H(+). It functions in the pathway cell wall biogenesis; peptidoglycan biosynthesis. Cell wall formation. The sequence is that of UDP-N-acetylmuramate--L-alanine ligase from Helicobacter pylori (strain J99 / ATCC 700824) (Campylobacter pylori J99).